A 273-amino-acid polypeptide reads, in one-letter code: L-fucose dehydrogenase (273 aa).

12 residues coordinate NAD(+): Arg19, Ile21, Asp40, Lys41, Asp62, Val63, Asn89, Tyr154, Lys158, Ile187, Thr189, and Leu191. Catalysis depends on Tyr154, which acts as the Proton acceptor.

Belongs to the short-chain dehydrogenases/reductases (SDR) family. Homotetramer.

It localises to the cytoplasm. It carries out the reaction L-fucose + NAD(+) = L-fucono-1,5-lactone + NADH + H(+). The enzyme catalyses D-arabinose + NAD(+) = D-arabinono-1,5-lactone + NADH + H(+). The catalysed reaction is L-galactose + NAD(+) = L-galactono-1,5-lactone + NADH + H(+). It participates in carbohydrate degradation; L-fucose degradation. Its function is as follows. Catalyzes the NAD(+)-dependent oxidation of L-fucose, yielding L-fucono-1,5-lactone, which rapidly converts spontaneously to L-fucone-1,4-lactone. Can also act on D-arabinose and L-galactose, with lower catalytic efficiency. Does not use NADPH. May be the initial enzyme of the putative L-fucose degradation pathway in mammals. This Mus musculus (Mouse) protein is L-fucose dehydrogenase.